Reading from the N-terminus, the 267-residue chain is Hydroxyethylthiazole kinase (267 aa).

Methionine 48 contacts substrate. The ATP site is built by arginine 124 and serine 170. Glycine 197 contributes to the substrate binding site.

This sequence belongs to the Thz kinase family. Mg(2+) serves as cofactor.

It catalyses the reaction 5-(2-hydroxyethyl)-4-methylthiazole + ATP = 4-methyl-5-(2-phosphooxyethyl)-thiazole + ADP + H(+). The protein operates within cofactor biosynthesis; thiamine diphosphate biosynthesis; 4-methyl-5-(2-phosphoethyl)-thiazole from 5-(2-hydroxyethyl)-4-methylthiazole: step 1/1. Functionally, catalyzes the phosphorylation of the hydroxyl group of 4-methyl-5-beta-hydroxyethylthiazole (THZ). The chain is Hydroxyethylthiazole kinase from Leptospira biflexa serovar Patoc (strain Patoc 1 / Ames).